The chain runs to 200 residues: uncharacterized protein (200 aa).

3 disordered regions span residues 1-27, 42-79, and 169-200; these read MTDT…EAET, IPKE…STNA, and HGRA…EHGR. A compositionally biased stretch (basic and acidic residues) spans 187–200; it reads RQMEKTGAGREHGR.

This is an uncharacterized protein from Shigella flexneri.